A 543-amino-acid polypeptide reads, in one-letter code: CTP synthase (543 aa).

An amidoligase domain region spans residues 1-265; the sequence is MTNYIFVTGG…DQLVVDRFGL (265 aa). Serine 13 is a binding site for CTP. Residue serine 13 participates in UTP binding. ATP contacts are provided by residues 14–19 and aspartate 71; that span reads SLGKGI. Positions 71 and 139 each coordinate Mg(2+). Residues 146-148, 186-191, and lysine 222 contribute to the CTP site; these read DIE and KTKPTQ. UTP-binding positions include 186–191 and lysine 222; that span reads KTKPTQ. An ATP-binding site is contributed by 238–240; sequence KDV. The Glutamine amidotransferase type-1 domain occupies 290-541; that stretch reads NIGMIGKYVE…VAAAGKYQKE (252 aa). An L-glutamine-binding site is contributed by glycine 351. Catalysis depends on cysteine 378, which acts as the Nucleophile; for glutamine hydrolysis. L-glutamine is bound by residues 379–382, glutamate 402, and arginine 469; that span reads LGMQ. Active-site residues include histidine 514 and glutamate 516.

This sequence belongs to the CTP synthase family. Homotetramer.

The catalysed reaction is UTP + L-glutamine + ATP + H2O = CTP + L-glutamate + ADP + phosphate + 2 H(+). The enzyme catalyses L-glutamine + H2O = L-glutamate + NH4(+). It carries out the reaction UTP + NH4(+) + ATP = CTP + ADP + phosphate + 2 H(+). Its pathway is pyrimidine metabolism; CTP biosynthesis via de novo pathway; CTP from UDP: step 2/2. Allosterically activated by GTP, when glutamine is the substrate; GTP has no effect on the reaction when ammonia is the substrate. The allosteric effector GTP functions by stabilizing the protein conformation that binds the tetrahedral intermediate(s) formed during glutamine hydrolysis. Inhibited by the product CTP, via allosteric rather than competitive inhibition. Catalyzes the ATP-dependent amination of UTP to CTP with either L-glutamine or ammonia as the source of nitrogen. Regulates intracellular CTP levels through interactions with the four ribonucleotide triphosphates. The protein is CTP synthase of Alteromonas mediterranea (strain DSM 17117 / CIP 110805 / LMG 28347 / Deep ecotype).